The following is a 156-amino-acid chain: Putative thymidylate kinase (156 aa).

An ATP-binding site is contributed by Gly7 to Thr14.

The protein belongs to the thymidylate kinase family.

The enzyme catalyses dTMP + ATP = dTDP + ADP. It functions in the pathway pyrimidine metabolism; dTTP biosynthesis. Catalyzes the conversion of dTMP to dTDP. In Acidianus convivator (ABV), this protein is Putative thymidylate kinase.